The primary structure comprises 306 residues: MLNYFIKRLLGLIPTLLIVMVLVFLFVHLLPGDPARLAAGREADAAVIEMVRQDLGLDKPLPHQFWHFLTNILQGDLGTSMVSKRPVTQEIALRFMPTFWLTVCSMAWAVIFGMAIGIVSAVWRNGWPDRIGMTLAVSGLSFPAFALGMLLMQIFSVELGWLPTVGADTWLHYILPSLTLGAAVAAVMARFTRASFVDVLQEDYMRTARAKGVRESLVVLKHGLRNALIPVVTMMGLQFGFLLGGSIVVEKVFNWPGLGRLLVDSVEMRDYPVIQAEVLLFSLEFILINLLVDMLYAAINPAIRYK.

The Cytoplasmic segment spans residues 1–8; the sequence is MLNYFIKR. Residues 9 to 29 form a helical membrane-spanning segment; sequence LLGLIPTLLIVMVLVFLFVHL. Residues 30–98 lie on the Periplasmic side of the membrane; it reads LPGDPARLAA…QEIALRFMPT (69 aa). The ABC transmembrane type-1 domain occupies 95–292; sequence FMPTFWLTVC…LEFILINLLV (198 aa). Residues 99–119 form a helical membrane-spanning segment; the sequence is FWLTVCSMAWAVIFGMAIGIV. At 120 to 130 the chain is on the cytoplasmic side; that stretch reads SAVWRNGWPDR. The helical transmembrane segment at 131–151 threads the bilayer; the sequence is IGMTLAVSGLSFPAFALGMLL. The Periplasmic portion of the chain corresponds to 152–168; that stretch reads MQIFSVELGWLPTVGAD. The helical transmembrane segment at 169 to 189 threads the bilayer; sequence TWLHYILPSLTLGAAVAAVMA. The Cytoplasmic segment spans residues 190-228; sequence RFTRASFVDVLQEDYMRTARAKGVRESLVVLKHGLRNAL. The helical transmembrane segment at 229-249 threads the bilayer; it reads IPVVTMMGLQFGFLLGGSIVV. Residues 250 to 278 lie on the Periplasmic side of the membrane; that stretch reads EKVFNWPGLGRLLVDSVEMRDYPVIQAEV. A helical transmembrane segment spans residues 279-299; sequence LLFSLEFILINLLVDMLYAAI. The Cytoplasmic segment spans residues 300 to 306; sequence NPAIRYK.

It belongs to the binding-protein-dependent transport system permease family. As to quaternary structure, the complex is composed of two ATP-binding proteins (GsiA), two transmembrane proteins (GsiC and GsiD) and a solute-binding protein (GsiB).

It is found in the cell inner membrane. Its function is as follows. Part of the ABC transporter complex GsiABCD involved in glutathione import. Probably responsible for the translocation of the substrate across the membrane. The sequence is that of Glutathione transport system permease protein GsiC from Pectobacterium atrosepticum (strain SCRI 1043 / ATCC BAA-672) (Erwinia carotovora subsp. atroseptica).